The following is a 535-amino-acid chain: Glucose-6-phosphate isomerase (535 aa).

Glutamate 359 acts as the Proton donor in catalysis. Active-site residues include histidine 390 and lysine 505.

This sequence belongs to the GPI family.

The protein localises to the cytoplasm. The catalysed reaction is alpha-D-glucose 6-phosphate = beta-D-fructose 6-phosphate. It participates in carbohydrate biosynthesis; gluconeogenesis. Its pathway is carbohydrate degradation; glycolysis; D-glyceraldehyde 3-phosphate and glycerone phosphate from D-glucose: step 2/4. In terms of biological role, catalyzes the reversible isomerization of glucose-6-phosphate to fructose-6-phosphate. This Treponema pallidum (strain Nichols) protein is Glucose-6-phosphate isomerase.